We begin with the raw amino-acid sequence, 1216 residues long: Coatomer subunit alpha-1 (1216 aa).

WD repeat units lie at residues 7–48 (TKSN…DRFD), 49–88 (EHEG…CLFT), 91–132 (GHLD…SVLT), 133–172 (GHNH…KKTV), 202–241 (GHDR…AWEV), 246–285 (GHMN…GLQT), 288–326 (REHD…PAFA), and 363–404 (SLNQ…VGRS).

Oligomeric complex that consists of at least the alpha, beta, beta', gamma, delta, epsilon and zeta subunits.

It localises to the cytoplasm. Its subcellular location is the golgi apparatus membrane. The protein localises to the cytoplasmic vesicle. It is found in the COPI-coated vesicle membrane. In terms of biological role, the coatomer is a cytosolic protein complex that binds to dilysine motifs and reversibly associates with Golgi non-clathrin-coated vesicles, which further mediate biosynthetic protein transport from the ER, via the Golgi up to the trans Golgi network. Coatomer complex is required for budding from Golgi membranes, and is essential for the retrograde Golgi-to-ER transport of dilysine-tagged proteins. This is Coatomer subunit alpha-1 from Arabidopsis thaliana (Mouse-ear cress).